Consider the following 67-residue polypeptide: Histone H2A (67 aa).

Glutamine 60 bears the N5-methylglutamine mark.

Belongs to the histone H2A family. As to quaternary structure, the nucleosome is a histone octamer containing two molecules each of H2A, H2B, H3 and H4 assembled in one H3-H4 heterotetramer and two H2A-H2B heterodimers. The octamer wraps approximately 147 bp of DNA.

The protein localises to the nucleus. It localises to the chromosome. Functionally, core component of nucleosome. Nucleosomes wrap and compact DNA into chromatin, limiting DNA accessibility to the cellular machineries which require DNA as a template. Histones thereby play a central role in transcription regulation, DNA repair, DNA replication and chromosomal stability. DNA accessibility is regulated via a complex set of post-translational modifications of histones, also called histone code, and nucleosome remodeling. This chain is Histone H2A, found in Olisthodiscus luteus (Marine phytoflagellate).